Reading from the N-terminus, the 717-residue chain is Proline-rich receptor-like protein kinase PERK2 (717 aa).

Pro residues predominate over residues 1-197 (MSSAPPPGGT…GSLSPPPPAS (197 aa)). The disordered stretch occupies residues 1-221 (MSSAPPPGGT…GSSPPAQSSK (221 aa)). Residues 1 to 228 (MSSAPPPGGT…SSKELSKGAM (228 aa)) lie on the Extracellular side of the membrane. The segment covering 198-220 (PSGGRSPSTPSTTPGSSPPAQSS) has biased composition (low complexity). Residues 229 to 249 (VGIAIGGGFVLLVALALIFFL) traverse the membrane as a helical segment. Residues 250–717 (CKKKRRRDNE…NIKRPGQGYG (468 aa)) lie on the Cytoplasmic side of the membrane. Residues 258–323 (NEAPPAPIDG…YDSNYSDQSV (66 aa)) form a disordered region. Residues 289–303 (VPPPKSPSSAPPRPP) are compositionally biased toward pro residues. Residues 307-322 (SSGSSGDYDSNYSDQS) show a composition bias toward low complexity. A Protein kinase domain is found at 354–631 (FSEANLLGQG…QVARVLEGNI (278 aa)). ATP contacts are provided by residues 360–368 (LGQGGFGYV) and Lys-382. Asp-478 functions as the Proton acceptor in the catalytic mechanism. Polar residues-rich tracts occupy residues 632–644 (SPSD…TPGH) and 692–705 (SWSS…QGKA). Disordered regions lie at residues 632–665 (SPSD…DNEG) and 690–717 (YPSW…QGYG).

This sequence belongs to the protein kinase superfamily. Ser/Thr protein kinase family. As to expression, mostly expressed in inflorescence bolt, flower buds and siliques, and, to a lower extent, in roots, seedlings and leaves.

It localises to the cell membrane. The catalysed reaction is L-seryl-[protein] + ATP = O-phospho-L-seryl-[protein] + ADP + H(+). The enzyme catalyses L-threonyl-[protein] + ATP = O-phospho-L-threonyl-[protein] + ADP + H(+). The polypeptide is Proline-rich receptor-like protein kinase PERK2 (PERK2) (Arabidopsis thaliana (Mouse-ear cress)).